The following is a 149-amino-acid chain: Nucleoside diphosphate kinase (149 aa).

ATP-binding residues include K9, F57, R85, T91, R102, and N112. H115 serves as the catalytic Pros-phosphohistidine intermediate.

Belongs to the NDK family. Homotetramer. Requires Mg(2+) as cofactor.

The protein resides in the cytoplasm. It carries out the reaction a 2'-deoxyribonucleoside 5'-diphosphate + ATP = a 2'-deoxyribonucleoside 5'-triphosphate + ADP. The catalysed reaction is a ribonucleoside 5'-diphosphate + ATP = a ribonucleoside 5'-triphosphate + ADP. Major role in the synthesis of nucleoside triphosphates other than ATP. The ATP gamma phosphate is transferred to the NDP beta phosphate via a ping-pong mechanism, using a phosphorylated active-site intermediate. This Roseiflexus castenholzii (strain DSM 13941 / HLO8) protein is Nucleoside diphosphate kinase.